A 439-amino-acid chain; its full sequence is Ornithine aminotransferase, mitochondrial (439 aa).

Residues 1–25 constitute a mitochondrion; in hepatic form transit peptide; the sequence is MFSKLAHLQRFAVLSRGVHSSVASA. The transit peptide at 1 to 35 directs the protein to the mitochondrion; in renal form; the sequence is MFSKLAHLQRFAVLSRGVHSSVASATSVATKKTVQ. Lysine 49 and lysine 66 each carry N6-acetyllysine. Lysine 102 bears the N6-succinyllysine mark. Lysine 107 carries the N6-acetyllysine; alternate modification. An N6-succinyllysine; alternate modification is found at lysine 107. Lysine 292 is modified (N6-(pyridoxal phosphate)lysine). An N6-acetyllysine; alternate modification is found at lysine 362. Lysine 362 is modified (N6-succinyllysine; alternate). N6-acetyllysine occurs at positions 386 and 392. The residue at position 405 (lysine 405) is an N6-acetyllysine; alternate. Lysine 405 is modified (N6-succinyllysine; alternate). At lysine 421 the chain carries N6-acetyllysine.

The protein belongs to the class-III pyridoxal-phosphate-dependent aminotransferase family. In terms of assembly, homohexamer. Requires pyridoxal 5'-phosphate as cofactor.

It localises to the mitochondrion matrix. It catalyses the reaction L-ornithine + 2-oxoglutarate = L-glutamate 5-semialdehyde + L-glutamate. Its pathway is amino-acid biosynthesis; L-proline biosynthesis; L-glutamate 5-semialdehyde from L-ornithine: step 1/1. Catalyzes the reversible interconversion of L-ornithine and 2-oxoglutarate to L-glutamate semialdehyde and L-glutamate. The chain is Ornithine aminotransferase, mitochondrial (OAT) from Homo sapiens (Human).